Consider the following 1409-residue polypeptide: Inositol hexakisphosphate and diphosphoinositol-pentakisphosphate kinase 1 (1409 aa).

64-65 contributes to the substrate binding site; it reads KK. ATP contacts are provided by residues arginine 145, lysine 198, histidine 205, arginine 224, 248–251, and 257–259; these read EEFM and DVK. Substrate is bound at residue 224–225; the sequence is RK. Substrate contacts are provided by lysine 259 and arginine 273. Residues serine 275, aspartate 320, and 332 to 334 contribute to the ATP site; that span reads DVN. 337–340 is a substrate binding site; that stretch reads SFVK. The segment at 382–453 is polyphosphoinositide-binding domain; that stretch reads PTTSGTMMEL…VLDITRLLLA (72 aa). The segment at 891–996 is disordered; that stretch reads GVEEEGSAPA…PTEMKQSGLG (106 aa). 2 positions are modified to phosphoserine: serine 920 and serine 963. Residues 981 to 996 are compositionally biased toward polar residues; the sequence is FSSSRPPTEMKQSGLG. Residues serine 1013 and serine 1049 each carry the phosphoserine modification. Residues 1110 to 1119 are compositionally biased toward polar residues; that stretch reads MHSSQASDNP. The segment at 1110-1183 is disordered; the sequence is MHSSQASDNP…PSLNSHVAEE (74 aa). 2 positions are modified to phosphoserine: serine 1121 and serine 1128. Positions 1144 to 1162 are enriched in low complexity; the sequence is SSGPSSTVSSAGPSSPTTV. Positions 1163–1178 are enriched in polar residues; that stretch reads DGNSQFGFSDQPSLNS.

It belongs to the histidine acid phosphatase family. VIP1 subfamily.

It is found in the cytoplasm. It localises to the cytosol. Its subcellular location is the cell membrane. The catalysed reaction is 1D-myo-inositol hexakisphosphate + ATP = 1-diphospho-1D-myo-inositol 2,3,4,5,6-pentakisphosphate + ADP. It carries out the reaction 5-diphospho-1D-myo-inositol 1,2,3,4,6-pentakisphosphate + ATP + H(+) = 1,5-bis(diphospho)-1D-myo-inositol 2,3,4,6-tetrakisphosphate + ADP. Functionally, bifunctional inositol kinase that acts in concert with the IP6K kinases IP6K1, IP6K2 and IP6K3 to synthesize the diphosphate group-containing inositol pyrophosphates diphosphoinositol pentakisphosphate, PP-InsP5, and bis-diphosphoinositol tetrakisphosphate, (PP)2-InsP4. PP-InsP5 and (PP)2-InsP4, also respectively called InsP7 and InsP8, regulate a variety of cellular processes, including apoptosis, vesicle trafficking, cytoskeletal dynamics, exocytosis, insulin signaling and neutrophil activation. Phosphorylates inositol hexakisphosphate (InsP6) at position 1 to produce PP-InsP5 which is in turn phosphorylated by IP6Ks to produce (PP)2-InsP4. Alternatively, phosphorylates PP-InsP5 at position 1, produced by IP6Ks from InsP6, to produce (PP)2-InsP4. Activated when cells are exposed to hyperosmotic stress. The protein is Inositol hexakisphosphate and diphosphoinositol-pentakisphosphate kinase 1 of Pongo abelii (Sumatran orangutan).